Here is a 276-residue protein sequence, read N- to C-terminus: Outer membrane lipoprotein 2 (276 aa).

The first 19 residues, 1–19 (MNFKKLLGVALVSALALTA), serve as a signal peptide directing secretion. Cys-20 carries the N-palmitoyl cysteine lipid modification. Cys-20 carries the S-diacylglycerol cysteine lipid modification.

The protein belongs to the NlpA lipoprotein family.

It is found in the cell outer membrane. The sequence is that of Outer membrane lipoprotein 2 (plpB) from Mannheimia haemolytica (Pasteurella haemolytica).